A 262-amino-acid polypeptide reads, in one-letter code: Thiazole synthase (262 aa).

Residue Lys-96 is the Schiff-base intermediate with DXP of the active site. 1-deoxy-D-xylulose 5-phosphate is bound by residues Gly-157, 184–185 (AG), and 206–207 (NT).

This sequence belongs to the ThiG family. Homotetramer. Forms heterodimers with either ThiH or ThiS.

The protein localises to the cytoplasm. It catalyses the reaction [ThiS sulfur-carrier protein]-C-terminal-Gly-aminoethanethioate + 2-iminoacetate + 1-deoxy-D-xylulose 5-phosphate = [ThiS sulfur-carrier protein]-C-terminal Gly-Gly + 2-[(2R,5Z)-2-carboxy-4-methylthiazol-5(2H)-ylidene]ethyl phosphate + 2 H2O + H(+). The protein operates within cofactor biosynthesis; thiamine diphosphate biosynthesis. In terms of biological role, catalyzes the rearrangement of 1-deoxy-D-xylulose 5-phosphate (DXP) to produce the thiazole phosphate moiety of thiamine. Sulfur is provided by the thiocarboxylate moiety of the carrier protein ThiS. In vitro, sulfur can be provided by H(2)S. In Legionella pneumophila (strain Paris), this protein is Thiazole synthase.